A 675-amino-acid chain; its full sequence is Methionine--tRNA ligase (675 aa).

Positions 15–25 (PYANGPIHLGH) match the 'HIGH' region motif. 4 residues coordinate Zn(2+): Cys146, Cys149, Cys159, and Cys162. Residues 332–336 (KMSKS) carry the 'KMSKS' region motif. Lys335 is an ATP binding site. The 103-residue stretch at 573–675 (DFAKVDMRVA…SGAQPGMQVK (103 aa)) folds into the tRNA-binding domain.

It belongs to the class-I aminoacyl-tRNA synthetase family. MetG type 1 subfamily. Homodimer. It depends on Zn(2+) as a cofactor.

The protein localises to the cytoplasm. The enzyme catalyses tRNA(Met) + L-methionine + ATP = L-methionyl-tRNA(Met) + AMP + diphosphate. Its function is as follows. Is required not only for elongation of protein synthesis but also for the initiation of all mRNA translation through initiator tRNA(fMet) aminoacylation. The polypeptide is Methionine--tRNA ligase (Photorhabdus laumondii subsp. laumondii (strain DSM 15139 / CIP 105565 / TT01) (Photorhabdus luminescens subsp. laumondii)).